The chain runs to 565 residues: CTP synthase (565 aa).

Positions 1–272 (MARPKNVKHI…DLRVMKKLGL (272 aa)) are amidoligase domain. CTP is bound at residue Ser18. Ser18 contacts UTP. 19-24 (SLGKGI) serves as a coordination point for ATP. Tyr59 serves as a coordination point for L-glutamine. Asp76 contributes to the ATP binding site. Mg(2+)-binding residues include Asp76 and Glu146. Residues 153–155 (DIE), 193–198 (KTKPTQ), and Lys229 contribute to the CTP site. UTP-binding positions include 193–198 (KTKPTQ) and Lys229. Residues 299 to 543 (TIGICGKYTE…VHAAKEFAQG (245 aa)) enclose the Glutamine amidotransferase type-1 domain. Position 363 (Gly363) interacts with L-glutamine. The active-site Nucleophile; for glutamine hydrolysis is the Cys390. L-glutamine-binding positions include 391–394 (LGMQ), Glu414, and Arg471. Catalysis depends on residues His516 and Glu518.

It belongs to the CTP synthase family. Homotetramer.

The catalysed reaction is UTP + L-glutamine + ATP + H2O = CTP + L-glutamate + ADP + phosphate + 2 H(+). It catalyses the reaction L-glutamine + H2O = L-glutamate + NH4(+). The enzyme catalyses UTP + NH4(+) + ATP = CTP + ADP + phosphate + 2 H(+). The protein operates within pyrimidine metabolism; CTP biosynthesis via de novo pathway; CTP from UDP: step 2/2. Its activity is regulated as follows. Allosterically activated by GTP, when glutamine is the substrate; GTP has no effect on the reaction when ammonia is the substrate. The allosteric effector GTP functions by stabilizing the protein conformation that binds the tetrahedral intermediate(s) formed during glutamine hydrolysis. Inhibited by the product CTP, via allosteric rather than competitive inhibition. In terms of biological role, catalyzes the ATP-dependent amination of UTP to CTP with either L-glutamine or ammonia as the source of nitrogen. Regulates intracellular CTP levels through interactions with the four ribonucleotide triphosphates. The chain is CTP synthase from Chlorobaculum tepidum (strain ATCC 49652 / DSM 12025 / NBRC 103806 / TLS) (Chlorobium tepidum).